Consider the following 373-residue polypeptide: Histidinol-phosphate aminotransferase (373 aa).

Lysine 230 is modified (N6-(pyridoxal phosphate)lysine).

The protein belongs to the class-II pyridoxal-phosphate-dependent aminotransferase family. Histidinol-phosphate aminotransferase subfamily. Homodimer. Requires pyridoxal 5'-phosphate as cofactor.

The enzyme catalyses L-histidinol phosphate + 2-oxoglutarate = 3-(imidazol-4-yl)-2-oxopropyl phosphate + L-glutamate. It functions in the pathway amino-acid biosynthesis; L-histidine biosynthesis; L-histidine from 5-phospho-alpha-D-ribose 1-diphosphate: step 7/9. This is Histidinol-phosphate aminotransferase from Synechococcus elongatus (strain ATCC 33912 / PCC 7942 / FACHB-805) (Anacystis nidulans R2).